The following is an 896-amino-acid chain: Glutamate receptor 2.4 (896 aa).

An N-terminal signal peptide occupies residues 1–24; it reads MKRHLNDVVLVFLVFIFGVKLGKG. Over 25-565 the chain is Extracellular; it reads QNTTIQVINV…SSLIFFKPLT (541 aa). Residues Asn26, Asn46, Asn53, Asn204, Asn267, Asn331, Asn341, and Asn527 are each glycosylated (N-linked (GlcNAc...) asparagine). Residues 566–586 traverse the membrane as a helical segment; that stretch reads PGLWGMTLGSFFVVGFVVWIL. Topologically, residues 587-595 are cytoplasmic; it reads EHRVNSEFT. A helical transmembrane segment spans residues 596 to 616; sequence GPPQYQISTMFWFAFSIMVFA. At 617–620 the chain is on the cytoplasmic side; the sequence is PRER. The helical transmembrane segment at 621–641 threads the bilayer; it reads VMSFTARVVVITWYFIVLVLT. Topologically, residues 642–815 are extracellular; sequence QSYTASLSSL…VSFRKLSLDS (174 aa). Residues 816–836 traverse the membrane as a helical segment; the sequence is FLLLFVAAATVCTLALLKFVI. Residues 837 to 896 lie on the Cytoplasmic side of the membrane; it reads CFLIQNRIILNDEFYRGKRMKEMWLKFMESDGESYISRVRSTCPQVLIQPREEDIDPING.

Belongs to the glutamate-gated ion channel (TC 1.A.10.1) family. In terms of assembly, may form heteromers. Expressed predominantly in roots.

Its subcellular location is the membrane. Its function is as follows. Glutamate-gated receptor that probably acts as a non-selective cation channel. May be involved in light-signal transduction and calcium homeostasis via the regulation of calcium influx into cells. This is Glutamate receptor 2.4 (GLR2.4) from Arabidopsis thaliana (Mouse-ear cress).